Consider the following 406-residue polypeptide: Dual-specificity RNA methyltransferase RlmN (406 aa).

Residue E119 is the Proton acceptor of the active site. Residues 125–370 (DKGRGTLCVS…AMVRRTRGDD (246 aa)) enclose the Radical SAM core domain. A disulfide bridge links C132 with C375. C139, C143, and C146 together coordinate [4Fe-4S] cluster. S-adenosyl-L-methionine contacts are provided by residues 192 to 193 (GE), S224, 246 to 248 (SLH), and N332. The S-methylcysteine intermediate role is filled by C375.

The protein belongs to the radical SAM superfamily. RlmN family. [4Fe-4S] cluster is required as a cofactor.

It is found in the cytoplasm. The catalysed reaction is adenosine(2503) in 23S rRNA + 2 reduced [2Fe-2S]-[ferredoxin] + 2 S-adenosyl-L-methionine = 2-methyladenosine(2503) in 23S rRNA + 5'-deoxyadenosine + L-methionine + 2 oxidized [2Fe-2S]-[ferredoxin] + S-adenosyl-L-homocysteine. The enzyme catalyses adenosine(37) in tRNA + 2 reduced [2Fe-2S]-[ferredoxin] + 2 S-adenosyl-L-methionine = 2-methyladenosine(37) in tRNA + 5'-deoxyadenosine + L-methionine + 2 oxidized [2Fe-2S]-[ferredoxin] + S-adenosyl-L-homocysteine. Its function is as follows. Specifically methylates position 2 of adenine 2503 in 23S rRNA and position 2 of adenine 37 in tRNAs. m2A2503 modification seems to play a crucial role in the proofreading step occurring at the peptidyl transferase center and thus would serve to optimize ribosomal fidelity. This Xylella fastidiosa (strain Temecula1 / ATCC 700964) protein is Dual-specificity RNA methyltransferase RlmN.